We begin with the raw amino-acid sequence, 370 residues long: GTPase Obg (370 aa).

The 159-residue stretch at methionine 1 to leucine 159 folds into the Obg domain. The segment at asparagine 127 to glycine 147 is disordered. The region spanning alanine 160 to alanine 334 is the OBG-type G domain. GTP contacts are provided by residues glycine 166–serine 173, phenylalanine 191–alanine 195, aspartate 213–glycine 216, asparagine 284–aspartate 287, and serine 315–leucine 317. The Mg(2+) site is built by serine 173 and threonine 193.

Belongs to the TRAFAC class OBG-HflX-like GTPase superfamily. OBG GTPase family. Monomer. Mg(2+) serves as cofactor.

The protein resides in the cytoplasm. Its function is as follows. An essential GTPase which binds GTP, GDP and possibly (p)ppGpp with moderate affinity, with high nucleotide exchange rates and a fairly low GTP hydrolysis rate. Plays a role in control of the cell cycle, stress response, ribosome biogenesis and in those bacteria that undergo differentiation, in morphogenesis control. The polypeptide is GTPase Obg (Paraburkholderia phymatum (strain DSM 17167 / CIP 108236 / LMG 21445 / STM815) (Burkholderia phymatum)).